The primary structure comprises 388 residues: Alanine racemase (388 aa).

The Proton acceptor; specific for D-alanine role is filled by K44. At K44 the chain carries N6-(pyridoxal phosphate)lysine. R142 is a substrate binding site. The Proton acceptor; specific for L-alanine role is filled by Y273. Residue M321 participates in substrate binding.

This sequence belongs to the alanine racemase family. Requires pyridoxal 5'-phosphate as cofactor.

The catalysed reaction is L-alanine = D-alanine. It functions in the pathway amino-acid biosynthesis; D-alanine biosynthesis; D-alanine from L-alanine: step 1/1. Catalyzes the interconversion of L-alanine and D-alanine. May also act on other amino acids. This chain is Alanine racemase (alr), found in Mycobacterium leprae (strain TN).